The primary structure comprises 227 residues: uncharacterized protein (227 aa).

This is an uncharacterized protein from Haemophilus influenzae (Bacteriophage HP1).